The sequence spans 91 residues: Large ribosomal subunit protein bL31B (91 aa).

This sequence belongs to the bacterial ribosomal protein bL31 family. Type B subfamily. Part of the 50S ribosomal subunit.

The polypeptide is Large ribosomal subunit protein bL31B (Neisseria meningitidis serogroup B (strain ATCC BAA-335 / MC58)).